The primary structure comprises 248 residues: Probable transcriptional regulatory protein trd_1132 (248 aa).

The protein belongs to the TACO1 family.

It is found in the cytoplasm. The chain is Probable transcriptional regulatory protein trd_1132 from Thermomicrobium roseum (strain ATCC 27502 / DSM 5159 / P-2).